Consider the following 64-residue polypeptide: Cytochrome c oxidase subunit 9, mitochondrial (64 aa).

Residues 1 to 15 (MAATAVRPITGMLRR) are Mitochondrial matrix-facing. Residues 16-36 (GLILDIGIALGVGFVMANGYW) traverse the membrane as a helical segment. At 37–64 (YGYHMPRTNARDNYYKKLEEERAARMGA) the chain is on the mitochondrial intermembrane side.

This sequence belongs to the fungal cytochrome c oxidase subunit 7a family. As to quaternary structure, component of the cytochrome c oxidase (complex IV, CIV), a multisubunit enzyme composed of 11 subunits. The complex is composed of a catalytic core of 3 subunits Cox1, Cox2 and Cox3, encoded in the mitochondrial DNA, and 8 supernumerary subunits Cox4, Cox5a/Cox5, Cox6, Cox7, Cox8, Cox7a/Cox9, Cox6b/Cox12 and Cox6a/Cox13, which are encoded in the nuclear genome. The complex exists as a monomer or a dimer and forms respiratory supercomplexes (SCs) in the inner mitochondrial membrane with NADH-ubiquinone oxidoreductase (complex I, CI) and ubiquinol-cytochrome c oxidoreductase (cytochrome b-c1 complex, complex III, CIII), resulting in various different assemblies (supercomplexes I(1)IV(1), I(1)III(3)IV(2), III(2)IV(1) and III(2)IV(2) as well as larger supercomplexes of compositions like I(1)III(2)IV(5-6)).

The protein localises to the mitochondrion inner membrane. It participates in energy metabolism; oxidative phosphorylation. Functionally, component of the cytochrome c oxidase, the last enzyme in the mitochondrial electron transport chain which drives oxidative phosphorylation. The respiratory chain contains 3 multisubunit complexes succinate dehydrogenase (complex II, CII), ubiquinol-cytochrome c oxidoreductase (cytochrome b-c1 complex, complex III, CIII) and cytochrome c oxidase (complex IV, CIV), that cooperate to transfer electrons derived from NADH and succinate to molecular oxygen, creating an electrochemical gradient over the inner membrane that drives transmembrane transport and the ATP synthase. Cytochrome c oxidase is the component of the respiratory chain that catalyzes the reduction of oxygen to water. Electrons originating from reduced cytochrome c in the intermembrane space (IMS) are transferred via the dinuclear copper A center (CU(A)) of Cox2 and heme A of Cox1 to the active site in Cox1, a binuclear center (BNC) formed by heme A3 and copper B (CU(B)). The BNC reduces molecular oxygen to 2 water molecules using 4 electrons from cytochrome c in the IMS and 4 protons from the mitochondrial matrix. The polypeptide is Cytochrome c oxidase subunit 9, mitochondrial (cox-17) (Neurospora crassa (strain ATCC 24698 / 74-OR23-1A / CBS 708.71 / DSM 1257 / FGSC 987)).